Here is a 262-residue protein sequence, read N- to C-terminus: Probable DNA polymerase sliding clamp 1 (262 aa).

The DNA-binding element occupies 67-86 (KCEHTYELGVNVLNMFKLLR).

Belongs to the PCNA family.

Its function is as follows. Sliding clamp subunit. Responsible for tethering the catalytic subunit of DNA polymerase to DNA during high-speed replication. This chain is Probable DNA polymerase sliding clamp 1, found in Chlorella (PBCV-1).